A 479-amino-acid polypeptide reads, in one-letter code: Sulfate adenylyltransferase subunit 1 (479 aa).

One can recognise a tr-type G domain in the interval 25–239 (KSLLRFLTCG…EVLETVDIQR (215 aa)). The G1 stretch occupies residues 34–41 (GSVDDGKS). Residue 34 to 41 (GSVDDGKS) coordinates GTP. The segment at 92–96 (GITID) is G2. The segment at 113–116 (DTPG) is G3. GTP-binding positions include 113–117 (DTPGH) and 168–171 (NKMD). Residues 168–171 (NKMD) form a G4 region. Residues 206-208 (SAL) are G5.

The protein belongs to the TRAFAC class translation factor GTPase superfamily. Classic translation factor GTPase family. CysN/NodQ subfamily. In terms of assembly, heterodimer composed of CysD, the smaller subunit, and CysN.

The catalysed reaction is sulfate + ATP + H(+) = adenosine 5'-phosphosulfate + diphosphate. It functions in the pathway sulfur metabolism; hydrogen sulfide biosynthesis; sulfite from sulfate: step 1/3. With CysD forms the ATP sulfurylase (ATPS) that catalyzes the adenylation of sulfate producing adenosine 5'-phosphosulfate (APS) and diphosphate, the first enzymatic step in sulfur assimilation pathway. APS synthesis involves the formation of a high-energy phosphoric-sulfuric acid anhydride bond driven by GTP hydrolysis by CysN coupled to ATP hydrolysis by CysD. This chain is Sulfate adenylyltransferase subunit 1, found in Salmonella dublin (strain CT_02021853).